A 393-amino-acid chain; its full sequence is Bone morphogenetic protein 15 (393 aa).

A signal peptide spans 1–25; sequence MVLLSILRILLWGLVLFMEHRVQMT. A propeptide spanning residues 26–268 is cleaved from the precursor; the sequence is QVGQPSIAHL…DPSLLLRRAR (243 aa). 2 N-linked (GlcNAc...) asparagine glycosylation sites follow: N86 and N237. Cystine bridges form between C292–C358, C321–C390, and C325–C392. Residue N374 is glycosylated (N-linked (GlcNAc...) asparagine).

The protein belongs to the TGF-beta family. Homodimer. But, in contrast to other members of this family, cannot be disulfide-linked.

The protein localises to the secreted. May be involved in follicular development. Oocyte-specific growth/differentiation factor that stimulates folliculogenesis and granulosa cell (GC) growth. The sequence is that of Bone morphogenetic protein 15 (BMP15) from Ovis aries (Sheep).